Here is a 642-residue protein sequence, read N- to C-terminus: Threonine--tRNA ligase (642 aa).

Positions 1–61 constitute a TGS domain; that stretch reads MPVITLPDGS…DTDAQLAIIT (61 aa). The catalytic stretch occupies residues 243 to 534; sequence DHRKIGKQLD…LTEEFAGFFP (292 aa). Cysteine 334, histidine 385, and histidine 511 together coordinate Zn(2+).

The protein belongs to the class-II aminoacyl-tRNA synthetase family. Homodimer. The cofactor is Zn(2+).

It is found in the cytoplasm. The enzyme catalyses tRNA(Thr) + L-threonine + ATP = L-threonyl-tRNA(Thr) + AMP + diphosphate + H(+). In terms of biological role, catalyzes the attachment of threonine to tRNA(Thr) in a two-step reaction: L-threonine is first activated by ATP to form Thr-AMP and then transferred to the acceptor end of tRNA(Thr). Also edits incorrectly charged L-seryl-tRNA(Thr). In Pectobacterium atrosepticum (strain SCRI 1043 / ATCC BAA-672) (Erwinia carotovora subsp. atroseptica), this protein is Threonine--tRNA ligase.